We begin with the raw amino-acid sequence, 666 residues long: Protein SLY1 (666 aa).

4 consecutive repeat copies span residues 106-142 (KENI…DLAQ), 220-257 (KGGP…DSLE), 436-474 (LDIL…QNVE), and 478-514 (KEND…DGSD). The tract at residues 106–514 (KENIDIIVND…QNKSLEDGSD (409 aa)) is 4 X approximate repeats.

This sequence belongs to the STXBP/unc-18/SEC1 family. In terms of assembly, interacts with SED5.

Its subcellular location is the cytoplasm. The protein localises to the membrane. Functionally, able to suppress the functional loss of YPT1. SLY1 is essential for cell viability. May interact indirectly, or directly with YPT1. This is Protein SLY1 (SLY1) from Saccharomyces cerevisiae (strain ATCC 204508 / S288c) (Baker's yeast).